Consider the following 376-residue polypeptide: Biotin synthase (376 aa).

The region spanning 68–292 (NEVQISTLLS…IAVTRICCPS (225 aa)) is the Radical SAM core domain. [4Fe-4S] cluster-binding residues include Cys-83, Cys-87, and Cys-90. Residues Cys-129, Cys-160, Cys-220, and Arg-296 each contribute to the [2Fe-2S] cluster site.

This sequence belongs to the radical SAM superfamily. Biotin synthase family. Homodimer. Requires [4Fe-4S] cluster as cofactor. [2Fe-2S] cluster is required as a cofactor.

The enzyme catalyses (4R,5S)-dethiobiotin + (sulfur carrier)-SH + 2 reduced [2Fe-2S]-[ferredoxin] + 2 S-adenosyl-L-methionine = (sulfur carrier)-H + biotin + 2 5'-deoxyadenosine + 2 L-methionine + 2 oxidized [2Fe-2S]-[ferredoxin]. It functions in the pathway cofactor biosynthesis; biotin biosynthesis; biotin from 7,8-diaminononanoate: step 2/2. Functionally, catalyzes the conversion of dethiobiotin (DTB) to biotin by the insertion of a sulfur atom into dethiobiotin via a radical-based mechanism. This Psychrobacter cryohalolentis (strain ATCC BAA-1226 / DSM 17306 / VKM B-2378 / K5) protein is Biotin synthase.